A 558-amino-acid chain; its full sequence is uncharacterized protein (558 aa).

Residues 531–558 (NEDDGTSASPTAMTFDMPPEHPFYSHYR) are disordered.

This is an uncharacterized protein from Saccharomyces cerevisiae (strain ATCC 204508 / S288c) (Baker's yeast).